The following is a 114-amino-acid chain: Pro-FMRFamide-related neuropeptide FF (114 aa).

An N-terminal signal peptide occupies residues 1-21 (MDSKWAALLLLLLLLLNWGHT). The propeptide occupies 22–69 (EEAGSWGEDQVFAGEDKGPHPPQYAHIPDRIQTPGSLFRVLLQAMDTP). Position 82 is a phenylalanine amide (F82). Positions 85-100 (SAWGSWSKEQLNPQAR) are excised as a propeptide. F111 is modified (phenylalanine amide).

It belongs to the FARP (FMRFamide related peptide) family.

It localises to the secreted. Its function is as follows. Morphine modulating peptides. Have wide-ranging physiologic effects, including the modulation of morphine-induced analgesia, elevation of arterial blood pressure, and increased somatostatin secretion from the pancreas. Neuropeptide FF potentiates and sensitizes ASIC1 and ASIC3 channels. In Mus musculus (Mouse), this protein is Pro-FMRFamide-related neuropeptide FF (Npff).